Here is a 165-residue protein sequence, read N- to C-terminus: uncharacterized protein (165 aa).

In terms of domain architecture, Cupin type-1 spans 28 to 139; sequence QNALKDTGLA…KPNEREEAVK (112 aa).

This is an uncharacterized protein from Bacillus subtilis (strain 168).